We begin with the raw amino-acid sequence, 339 residues long: Methylthioribose-1-phosphate isomerase (339 aa).

Residues 52–54 (RGA), R89, and Q188 each bind substrate. Catalysis depends on D229, which acts as the Proton donor. Position 239–240 (239–240 (NK)) interacts with substrate.

Belongs to the eIF-2B alpha/beta/delta subunits family. MtnA subfamily.

It catalyses the reaction 5-(methylsulfanyl)-alpha-D-ribose 1-phosphate = 5-(methylsulfanyl)-D-ribulose 1-phosphate. It functions in the pathway amino-acid biosynthesis; L-methionine biosynthesis via salvage pathway; L-methionine from S-methyl-5-thio-alpha-D-ribose 1-phosphate: step 1/6. Functionally, catalyzes the interconversion of methylthioribose-1-phosphate (MTR-1-P) into methylthioribulose-1-phosphate (MTRu-1-P). This chain is Methylthioribose-1-phosphate isomerase, found in Anaeromyxobacter dehalogenans (strain 2CP-C).